The chain runs to 231 residues: Putative aminodeoxychorismate lyase (231 aa).

This sequence belongs to the class-IV pyridoxal-phosphate-dependent aminotransferase family. It depends on pyridoxal 5'-phosphate as a cofactor.

It is found in the cytoplasm. The protein resides in the nucleus. The enzyme catalyses 4-amino-4-deoxychorismate = 4-aminobenzoate + pyruvate + H(+). The protein operates within cofactor biosynthesis; tetrahydrofolate biosynthesis; 4-aminobenzoate from chorismate: step 2/2. Functionally, converts 4-amino-4-deoxychorismate into 4-aminobenzoate (PABA) and pyruvate. This is Putative aminodeoxychorismate lyase from Schizosaccharomyces pombe (strain 972 / ATCC 24843) (Fission yeast).